The primary structure comprises 231 residues: MTVHPPVVGHCDELQVALGAFRASAHVTQRWGDRLAAVLGGGGRLLAAGNGGSAAQAQHLTAELVGRYRDDRPPFSAIALHADTSSTTAIANDYGVDEVFARQVRAHGRKGDVLMLLSTSGASANLLSAADAARAAGVRVWALTGRAPNPLMAGSDESLCVEAPSTATVQEIHLVAVHMICAAFDAALERGEHGARAAGSAASTGRAARRERAASTGRAAGAGRAAQRKRR.

The SIS domain occupies 35–190 (LAAVLGGGGR…CAAFDAALER (156 aa)). 50–52 (NGG) serves as a coordination point for substrate. Zn(2+) contacts are provided by His-59 and Glu-63. Residues Glu-63, 92–93 (ND), 118–120 (STS), Ser-123, and Gln-170 each bind substrate. Zn(2+) contacts are provided by Gln-170 and His-178. 2 stretches are compositionally biased toward low complexity: residues 197–206 (AAGSAASTGR) and 214–225 (ASTGRAAGAGRA). Residues 197 to 231 (AAGSAASTGRAARRERAASTGRAAGAGRAAQRKRR) are disordered.

It belongs to the SIS family. GmhA subfamily. The cofactor is Zn(2+).

It is found in the cytoplasm. The catalysed reaction is 2 D-sedoheptulose 7-phosphate = D-glycero-alpha-D-manno-heptose 7-phosphate + D-glycero-beta-D-manno-heptose 7-phosphate. Its pathway is carbohydrate biosynthesis; D-glycero-D-manno-heptose 7-phosphate biosynthesis; D-glycero-alpha-D-manno-heptose 7-phosphate and D-glycero-beta-D-manno-heptose 7-phosphate from sedoheptulose 7-phosphate: step 1/1. Functionally, catalyzes the isomerization of sedoheptulose 7-phosphate in D-glycero-D-manno-heptose 7-phosphate. This chain is Phosphoheptose isomerase, found in Streptomyces coelicolor (strain ATCC BAA-471 / A3(2) / M145).